A 232-amino-acid chain; its full sequence is Large ribosomal subunit protein uL1 (232 aa).

The protein belongs to the universal ribosomal protein uL1 family. Part of the 50S ribosomal subunit.

Functionally, binds directly to 23S rRNA. The L1 stalk is quite mobile in the ribosome, and is involved in E site tRNA release. Its function is as follows. Protein L1 is also a translational repressor protein, it controls the translation of the L11 operon by binding to its mRNA. The polypeptide is Large ribosomal subunit protein uL1 (Bartonella bacilliformis (strain ATCC 35685 / KC583 / Herrer 020/F12,63)).